Here is a 716-residue protein sequence, read N- to C-terminus: Ubiquitin thioesterase zranb1-B (716 aa).

2 RanBP2-type zinc fingers span residues 3-33 (DLGL…QRHN) and 82-111 (TSSK…QRQQ). The Zn(2+) site is built by Cys-10, Cys-13, Cys-24, Cys-27, Cys-88, Cys-91, Cys-102, and Cys-105. The tract at residues 113-143 (SQQHSPLSPSETPQTSGSRPSPVTSDPCEEY) is disordered. The segment covering 118-136 (PLSPSETPQTSGSRPSPVT) has biased composition (polar residues). The segment at 152–181 (HAQRWPCSACTYENWPKSLRCVVCDHPKPS) adopts a RanBP2-type 3 zinc-finger fold. Zn(2+) contacts are provided by Cys-158, Cys-161, Cys-172, and Cys-175. The segment at 178-228 (PKPSGSPETPQQDSEAESATSPSIVNEQERENVRTAGGGGGGSRGRLRKLS) is disordered. Residues 183–203 (SPETPQQDSEAESATSPSIVN) are compositionally biased toward polar residues. ANK repeat units follow at residues 268 to 298 (RRSD…SGGD) and 321 to 348 (FTLV…QQTA). One can recognise an OTU domain in the interval 440-600 (LYALWNRTAG…RGHFSALVAM (161 aa)). Catalysis depends on Cys-451, which acts as the Nucleophile. Residue His-593 is the Proton acceptor of the active site.

It belongs to the peptidase C64 family.

Its subcellular location is the cytoplasm. The protein resides in the nucleus. The enzyme catalyses Thiol-dependent hydrolysis of ester, thioester, amide, peptide and isopeptide bonds formed by the C-terminal Gly of ubiquitin (a 76-residue protein attached to proteins as an intracellular targeting signal).. Functionally, ubiquitin thioesterase, which specifically hydrolyzes 'Lys-29'-linked and 'Lys-33'-linked diubiquitin. Also cleaves 'Lys-63'-linked chains, but with 40-fold less efficiency compared to 'Lys-29'-linked ones. Positive regulator of the Wnt signaling pathway that deubiquitinates apc protein, a negative regulator of Wnt-mediated transcription. Acts as a regulator of autophagy by mediating deubiquitination of pik3c3/vps34, thereby promoting autophagosome maturation. Plays a role in the regulation of cell morphology and cytoskeletal organization. Required in the stress fiber dynamics and cell migration. In Danio rerio (Zebrafish), this protein is Ubiquitin thioesterase zranb1-B (zranb1b).